A 241-amino-acid polypeptide reads, in one-letter code: Fatty acid metabolism regulator protein (241 aa).

The 69-residue stretch at 6–74 (KGPASFAEKY…HGKPTRVNNF (69 aa)) folds into the HTH gntR-type domain. Positions 34–53 (ERELSELIGVTRTTLREVLQ) form a DNA-binding region, H-T-H motif.

Homodimer.

The protein localises to the cytoplasm. Functionally, multifunctional regulator of fatty acid metabolism. In Shewanella sp. (strain ANA-3), this protein is Fatty acid metabolism regulator protein.